Here is an 87-residue protein sequence, read N- to C-terminus: Small ribosomal subunit protein bS20 (87 aa).

Residues 1–26 (MANIKSAKKRAVQSEKARKHNASRRS) form a disordered region.

This sequence belongs to the bacterial ribosomal protein bS20 family.

Its function is as follows. Binds directly to 16S ribosomal RNA. The sequence is that of Small ribosomal subunit protein bS20 from Salmonella gallinarum (strain 287/91 / NCTC 13346).